Here is a 383-residue protein sequence, read N- to C-terminus: Methenyltetrahydrofolate synthase domain-containing protein (383 aa).

The interval 249–301 is disordered; sequence AGKDVTLQGEHQHLPEPGCQQTVPLSVGRRPPDTPGPETNSMEAAPGSPPGEG. The RRM domain maps to 306-379; it reads ADVYVGNLPG…DTLRVALARQ (74 aa).

The chain is Methenyltetrahydrofolate synthase domain-containing protein (MTHFSD) from Homo sapiens (Human).